The primary structure comprises 332 residues: Holliday junction branch migration complex subunit RuvB (332 aa).

The interval 1-181 (MSRILDNELM…FGITGHMEYY (181 aa)) is large ATPase domain (RuvB-L). ATP contacts are provided by residues Leu20, Arg21, Gly62, Lys65, Thr66, Thr67, 128–130 (EDF), Arg171, Tyr181, and Arg218. Position 66 (Thr66) interacts with Mg(2+). A small ATPAse domain (RuvB-S) region spans residues 182-252 (EAGDLTEIVE…ITDQALSMLD (71 aa)). Residues 255 to 332 (QEGLDYVDQK…EHLGYEYMKE (78 aa)) are head domain (RuvB-H). The DNA site is built by Arg291, Arg310, Arg312, and Arg315.

This sequence belongs to the RuvB family. In terms of assembly, homohexamer. Forms an RuvA(8)-RuvB(12)-Holliday junction (HJ) complex. HJ DNA is sandwiched between 2 RuvA tetramers; dsDNA enters through RuvA and exits via RuvB. An RuvB hexamer assembles on each DNA strand where it exits the tetramer. Each RuvB hexamer is contacted by two RuvA subunits (via domain III) on 2 adjacent RuvB subunits; this complex drives branch migration. In the full resolvosome a probable DNA-RuvA(4)-RuvB(12)-RuvC(2) complex forms which resolves the HJ.

It localises to the cytoplasm. The enzyme catalyses ATP + H2O = ADP + phosphate + H(+). Its function is as follows. The RuvA-RuvB-RuvC complex processes Holliday junction (HJ) DNA during genetic recombination and DNA repair, while the RuvA-RuvB complex plays an important role in the rescue of blocked DNA replication forks via replication fork reversal (RFR). RuvA specifically binds to HJ cruciform DNA, conferring on it an open structure. The RuvB hexamer acts as an ATP-dependent pump, pulling dsDNA into and through the RuvAB complex. RuvB forms 2 homohexamers on either side of HJ DNA bound by 1 or 2 RuvA tetramers; 4 subunits per hexamer contact DNA at a time. Coordinated motions by a converter formed by DNA-disengaged RuvB subunits stimulates ATP hydrolysis and nucleotide exchange. Immobilization of the converter enables RuvB to convert the ATP-contained energy into a lever motion, pulling 2 nucleotides of DNA out of the RuvA tetramer per ATP hydrolyzed, thus driving DNA branch migration. The RuvB motors rotate together with the DNA substrate, which together with the progressing nucleotide cycle form the mechanistic basis for DNA recombination by continuous HJ branch migration. Branch migration allows RuvC to scan DNA until it finds its consensus sequence, where it cleaves and resolves cruciform DNA. The polypeptide is Holliday junction branch migration complex subunit RuvB (Streptococcus sanguinis (strain SK36)).